A 245-amino-acid chain; its full sequence is Uridylate kinase (245 aa).

ATP is bound at residue 12–15; the sequence is KLSG. The interval 20–25 is involved in allosteric activation by GTP; it reads GERGVG. Glycine 54 is a binding site for UMP. 2 residues coordinate ATP: glycine 55 and arginine 59. UMP contacts are provided by residues aspartate 74 and 135 to 142; that span reads IGSPYFST. Residues asparagine 163, tyrosine 169, and aspartate 172 each contribute to the ATP site.

This sequence belongs to the UMP kinase family. Homohexamer.

It is found in the cytoplasm. It catalyses the reaction UMP + ATP = UDP + ADP. Its pathway is pyrimidine metabolism; CTP biosynthesis via de novo pathway; UDP from UMP (UMPK route): step 1/1. With respect to regulation, allosterically activated by GTP. Inhibited by UTP. Functionally, catalyzes the reversible phosphorylation of UMP to UDP. The protein is Uridylate kinase of Streptococcus pneumoniae serotype 2 (strain D39 / NCTC 7466).